Here is a 544-residue protein sequence, read N- to C-terminus: Putative ankyrin repeat protein L289 (544 aa).

11 ANK repeats span residues 31 to 71 (KNFS…AQNE), 72 to 105 (HGWTALMIASILSNDWSSIKTVKLLLKKGADPNI), 110 to 143 (YSQTVLKLAASNVKYASNIKTIKLLIHYGADINH), 147 to 181 (LGVSVLHYCYIDYYTKSDNLEVIKLLLSYGMDINS), 185 to 218 (QGNTLLYIVSKVSQNNNSTETVKFLLENNADPNI), 222 to 255 (KGTTALMVASKYSNSTSNLATVKLLLDYEANINF), 259 to 297 (YNETALSKVVSNFYESNYNKNNFMTLKFLIQKGAIDIPI), 300 to 339 (DKLSILMVAVIRTYCSENSDNFTKLIELLLKHFNPNIQCS), 340 to 374 (NGKTVLHYLCNKQVCNFPYVDVINLLLKAGINPNI), 378 to 413 (QGKTALILACDNYCFLKNKEAVRLLCKVSTINTIDN), and 414 to 447 (TGQSALDYFLNKYKEKYTNILTIILKYGAYCVNK).

The sequence is that of Putative ankyrin repeat protein L289 from Acanthamoeba polyphaga mimivirus (APMV).